We begin with the raw amino-acid sequence, 318 residues long: 1-aminocyclopropane-1-carboxylate oxidase (318 aa).

Residues 153–253 (PNFGTKVANY…RMSIASFYNP (101 aa)) form the Fe2OG dioxygenase domain. 3 residues coordinate Fe cation: histidine 177, aspartate 179, and histidine 234.

Belongs to the iron/ascorbate-dependent oxidoreductase family. Fe cation serves as cofactor.

The catalysed reaction is 1-aminocyclopropane-1-carboxylate + L-ascorbate + O2 = ethene + L-dehydroascorbate + hydrogen cyanide + CO2 + 2 H2O. It participates in alkene biosynthesis; ethylene biosynthesis via S-adenosyl-L-methionine; ethylene from S-adenosyl-L-methionine: step 2/2. This chain is 1-aminocyclopropane-1-carboxylate oxidase (DK-ACO1), found in Diospyros kaki (Kaki persimmon).